The chain runs to 263 residues: Ribosomal RNA small subunit methyltransferase A (263 aa).

Residues Asn-20, Leu-22, Gly-47, Glu-68, Asp-90, and Asn-111 each contribute to the S-adenosyl-L-methionine site.

The protein belongs to the class I-like SAM-binding methyltransferase superfamily. rRNA adenine N(6)-methyltransferase family. RsmA subfamily.

The protein localises to the cytoplasm. The enzyme catalyses adenosine(1518)/adenosine(1519) in 16S rRNA + 4 S-adenosyl-L-methionine = N(6)-dimethyladenosine(1518)/N(6)-dimethyladenosine(1519) in 16S rRNA + 4 S-adenosyl-L-homocysteine + 4 H(+). Specifically dimethylates two adjacent adenosines (A1518 and A1519) in the loop of a conserved hairpin near the 3'-end of 16S rRNA in the 30S particle. May play a critical role in biogenesis of 30S subunits. This is Ribosomal RNA small subunit methyltransferase A from Chlorobium chlorochromatii (strain CaD3).